A 453-amino-acid chain; its full sequence is MSFDLIIKNGTVILENEARVVDIAVKDGKIAAIGQDLGDAKDVMDASGLVVSPGMVDAHTHISEPGRSHWEGYETGTRAAAKGGITTMIEMPLNQLPATVDRASIELKFDAAKGKLTIDAAQLGGLVSYNIDRLHELDEVGVVGFKCFVATCGDRGIDNDFRDVNDWQFFKGAQKLGELGQPVLVHCENALICDALGEEAKREGRVTAHDYVASRPVFTEVEAIRRVLYLAKVAGCRLHVCHVSSPEGVEEVTRARQEGQDVTCESCPHYFVLDTDQFEEIGTLAKCSPPIRDLENQKGMWEKLFNGEIDCLVSDHSPCPPEMKAGNIMKAWGGIAGLQSCMDVMFDEAVQKRGMSLPMFGKLMATNAADIFGLQQKGRIAPGKDADFVFIQPNSSYVLTNDDLEYRHKVSPYVGRTIGARITKTILRGDVIYDIEQGFPVAPKGQFILKHQQ.

The Zn(2+) site is built by His-59, His-61, Lys-146, His-186, His-242, and Asp-315. At Lys-146 the chain carries N6-carboxylysine.

The protein belongs to the metallo-dependent hydrolases superfamily. Allantoinase family. In terms of assembly, homotetramer. Requires Zn(2+) as cofactor. In terms of processing, carboxylation allows a single lysine to coordinate two zinc ions.

It catalyses the reaction (S)-allantoin + H2O = allantoate + H(+). Its pathway is nitrogen metabolism; (S)-allantoin degradation; allantoate from (S)-allantoin: step 1/1. Functionally, catalyzes the conversion of allantoin (5-ureidohydantoin) to allantoic acid by hydrolytic cleavage of the five-member hydantoin ring. The chain is Allantoinase from Escherichia coli O127:H6 (strain E2348/69 / EPEC).